Consider the following 676-residue polypeptide: Potassium voltage-gated channel subfamily KQT member 1 (676 aa).

Disordered stretches follow at residues 1-28 and 62-84; these read MAAA…RGSA and APPA…PRPP. Over 1–120 the chain is Cytoplasmic; sequence MAAASSPPRA…YNFLERPTGW (120 aa). Residue Ser27 is modified to Phosphoserine; by PKA. The segment covering 62–73 has biased composition (pro residues); it reads APPASPAAPAAP. Residues 121 to 142 traverse the membrane as a helical segment; sequence KCFVYHFAVFLIVLVCLIFSVL. The Extracellular segment spans residues 143–153; that stretch reads STIEQYAALAT. A helical membrane pass occupies residues 154 to 176; sequence GTLFWMEIVLVVFFGTEYVVRLW. Residues 177-192 lie on the Cytoplasmic side of the membrane; the sequence is SAGCRSKYVGLWGRLR. Residues 193-218 traverse the membrane as a helical segment; it reads FARKPISIIDLIVVVASMVVLCVGSK. Residues 219-226 lie on the Extracellular side of the membrane; sequence GQVFATSA. A helical; Voltage-sensor transmembrane segment spans residues 227-242; that stretch reads IRGIRFLQILRMLHVD. The interval 238–246 is interaction with KCNE3; sequence MLHVDRQGG. Over 243 to 260 the chain is Cytoplasmic; sequence RQGGTWRLLGSVVFIHRQ. Gln244 provides a ligand contact to a 1,2-diacyl-sn-glycero-3-phospho-(1D-myo-inositol-4,5-bisphosphate). Residues 261–283 traverse the membrane as a helical segment; sequence ELITTLYIGFLGLIFSSYFVYLA. Topologically, residues 284 to 299 are extracellular; sequence EKDAVNESGRVEFGSY. Asn289 carries N-linked (GlcNAc...) asparagine glycosylation. Residues 300-320 constitute an intramembrane region (pore-forming); the sequence is ADALWWGVVTVTTIGYGDKVP. Over 321–322 the chain is Extracellular; the sequence is QT. Residues 323-348 form a helical membrane-spanning segment; that stretch reads WVGKTIASCFSVFAISFFALPAGILG. Topologically, residues 349–676 are cytoplasmic; it reads SGFALKVQQK…VPRRGPDEGS (328 aa). The tract at residues 370–382 is interaction with CALM; it reads AAASLIQTAWRCY. 2 positions are modified to phosphoserine: Ser407 and Ser409. Residues 515–529 form an interaction with CALM; calcium-dependent region; it reads KVIRRMQYFVAKKKF. The segment at 535 to 572 is interaction with KCNE1 C-terminus; that stretch reads PYDVRDVIEQYSQGHLNLMVRIKELQRRLDQSIGKPSL. A coiled-coil region spans residues 585 to 621; the sequence is SNTIGARLNRVEDKVTQLDQRLALITDMLHQLLSLHG. An interaction with AKAP9 region spans residues 588–616; it reads IGARLNRVEDKVTQLDQRLALITDMLHQL. The segment at 589–620 is C-terminal assembly domain (tetramerization); that stretch reads GARLNRVEDKVTQLDQRLALITDMLHQLLSLH. The interval 620–676 is disordered; the sequence is HGGSTPGSGGPPREGGAHITQPCGSGGSVDPELFLPSNTLPTYEQLTVPRRGPDEGS. Positions 623 to 632 are enriched in gly residues; that stretch reads STPGSGGPPR. Positions 655–664 are enriched in polar residues; the sequence is PSNTLPTYEQ.

Belongs to the potassium channel family. KQT (TC 1.A.1.15) subfamily. Kv7.1/KCNQ1 sub-subfamily. As to quaternary structure, tetramer. Heterotetramer with KCNE1; targets to the membrane raft. Interacts (via C-terminus) with calmodulin; forms a heterooctameric structure (with 4:4 KCNQ1:CALM stoichiometry); the interaction is calcium-independent, constitutive, participates in the proper assembly of a functional channel and also acts a calcium sensor. KCNQ1 channels interact more strongly with Ca(2+)-CALM than with apoCALM. Interacts with AKAP9; targets protein kinase A (PKA) catalytic and regulatory subunits and protein phosphatase 1 (PP1) to the KCNQ1-KCNE1 complex, allowing PKA-mediated phosphorylation and increase of delayed rectifier potassium channel activity. Interacts with KCNE2; forms a heterooligomer complex that targets to the membrane raft and leading to currents with an apparently instantaneous activation, a rapid deactivation process and a linear current-voltage relationship and decreases the amplitude of the outward current. Interacts with AP2M1; mediates estrogen-induced internalization via clathrin-coated vesicles. Interacts with NEDD4L; promotes internalization and decreases I(Ks) currents. Interacts with USP2; counteracts the NEDD4L-specific down-regulation of I(Ks) and restore plasma membrane localization. Heterotetramer with KCNQ5; has a voltage-gated potassium channel activity. Interacts with KCNE3; four KCNE3 molecules are bound to one KCNQ1 tetramer (4:4 KCNQ1:KCNE3 stoichiometry); alters membrane raft localization; affects KCNQ1 structure and gating properties. Interacts with KCNE4; impairs KCNQ1 localization in lipid rafts and inhibits voltage-gated potassium channel activity. Interacts with KCNE5; impairs KCNQ1 localization in lipid rafts and only conducts current upon strong and continued depolarization. Interacts with SLC5A3; forms coregulatory channel-transporter complexes that modulate Na(+)-coupled myo-inositol influx through the transporter. Phosphorylation at Ser-27 by PKA; increases delayed rectifier potassium channel activity of the KCNQ1-KCNE1 complex through a macromolecular complex that includes PKA, PP1, and the targeting protein AKAP9. In terms of processing, ubiquitinated by NEDD4L; promotes internalization. The ubiquitinylated form is internalized through a clathrin-mediated endocytosis by interacting with AP2M1 and is recycled back to the cell membrane via RAB4A and RAB11A. Post-translationally, deubiquitinated by USP2; counteracts the NEDD4L-specific down-regulation of I(Ks) and restores the membrane localization. As to expression, abundantly expressed in heart, pancreas, prostate, kidney, small intestine and peripheral blood leukocytes. Less abundant in placenta, lung, spleen, colon, thymus, testis and ovaries.

It localises to the cell membrane. Its subcellular location is the cytoplasmic vesicle membrane. The protein resides in the early endosome. The protein localises to the membrane raft. It is found in the endoplasmic reticulum. It localises to the basolateral cell membrane. Its subcellular location is the apical cell membrane. The enzyme catalyses K(+)(in) = K(+)(out). With respect to regulation, PIP2 molecule is essential to activate KCNQ channels by inducing the coupling of the voltage-sensing domain (VSD) and the pore-forming domain (PD). Upon channel activation, PIP2 disrupts the VSD-calmodulin/CALM interactions, causing the release of CALM from the VSD which triggers the opening of the gate. Calcium potentiates KCNQ1 channel current through calcium-bound CALM. Calcium-bound CALM competes with PIP2 to stabilize the channel open state. Its function is as follows. Pore-forming subunit of the voltage-gated potassium (Kv) channel involved in the regulation of cardiomyocyte excitability and important in normal development and functions of myocardium, inner ear, stomach and colon. Associates with KCNE beta subunits that modulates current kinetics. Induces a voltage-dependent current by rapidly activating and slowly deactivating potassium-selective outward current. Also promotes a delayed voltage activated potassium current showing outward rectification characteristic. During beta-adrenergic receptor stimulation, participates in cardiac repolarization by associating with KCNE1 to form the I(Ks) cardiac potassium current that increases the amplitude and slows down the activation kinetics of outward potassium current I(Ks). Muscarinic agonist oxotremorine-M strongly suppresses KCNQ1/KCNE1 current. When associated with KCNE3, forms the potassium channel that is important for cyclic AMP-stimulated intestinal secretion of chloride ions. This interaction with KCNE3 is reduced by 17beta-estradiol, resulting in the reduction of currents. During conditions of increased substrate load, maintains the driving force for proximal tubular and intestinal sodium ions absorption, gastric acid secretion, and cAMP-induced jejunal chloride ions secretion. Allows the provision of potassium ions to the luminal membrane of the secretory canaliculus in the resting state as well as during stimulated acid secretion. When associated with KCNE2, forms a heterooligomer complex leading to currents with an apparently instantaneous activation, a rapid deactivation process and a linear current-voltage relationship and decreases the amplitude of the outward current. When associated with KCNE4, inhibits voltage-gated potassium channel activity. When associated with KCNE5, this complex only conducts current upon strong and continued depolarization. Also forms a heterotetramer with KCNQ5; has a voltage-gated potassium channel activity. Binds with phosphatidylinositol 4,5-bisphosphate. KCNQ1-KCNE2 channel associates with Na(+)-coupled myo-inositol symporter in the apical membrane of choroid plexus epithelium and regulates the myo-inositol gradient between blood and cerebrospinal fluid with an impact on neuron excitability. In terms of biological role, non-functional alone but modulatory when coexpressed with the full-length isoform 1. This Homo sapiens (Human) protein is Potassium voltage-gated channel subfamily KQT member 1.